Reading from the N-terminus, the 705-residue chain is Protein artemis (705 aa).

Phosphothreonine is present on Thr380. Ser385 is modified (phosphoserine). The segment covering 451–462 (EESNSDSGEELE) has biased composition (acidic residues). Disordered regions lie at residues 451 to 484 (EESN…NADP), 535 to 569 (PKLC…GWDS), and 638 to 675 (TLSG…AELP). Over residues 546–559 (THISSQNSSQSTHI) the composition is skewed to low complexity. The segment covering 560–569 (TDQGSQGWDS) has biased composition (polar residues). Low complexity predominate over residues 652–662 (SSTRADSQSSS). Ser658 bears the Phosphoserine; by ATM mark.

This sequence belongs to the DNA repair metallo-beta-lactamase (DRMBL) family. As to quaternary structure, interacts with LIG4; the interaction is direct. Interacts with ATM. Interacts with BRCA1. Interacts with PRKDC. Interacts with TP53BP1. Also exhibits ATM- and phosphorylation-dependent interaction with the MRN complex, composed of MRE11, RAD50, and NBN. In terms of processing, phosphorylation on undefined residues by PRKDC may stimulate endonucleolytic activity on 5' and 3' hairpins and overhangs. PRKDC must remain present, even after phosphorylation, for efficient hairpin opening. Also phosphorylated by ATM in response to ionizing radiation (IR) and by ATR in response to ultraviolet (UV) radiation.

The protein resides in the nucleus. In terms of biological role, required for V(D)J recombination, the process by which exons encoding the antigen-binding domains of immunoglobulins and T-cell receptor proteins are assembled from individual V, (D), and J gene segments. V(D)J recombination is initiated by the lymphoid specific RAG endonuclease complex, which generates site specific DNA double strand breaks (DSBs). These DSBs present two types of DNA end structures: hairpin sealed coding ends and phosphorylated blunt signal ends. These ends are independently repaired by the non homologous end joining (NHEJ) pathway to form coding and signal joints respectively. This protein likely exhibits single-strand specific 5'-3' exonuclease activity in isolation, and may acquire endonucleolytic activity on 5' and 3' hairpins and overhangs when in a complex with PRKDC. The latter activity may be required specifically for the resolution of closed hairpins prior to the formation of the coding joint. May also be required for the repair of complex DSBs induced by ionizing radiation, which require substantial end-processing prior to religation by NHEJ. In Mus musculus (Mouse), this protein is Protein artemis (Dclre1c).